We begin with the raw amino-acid sequence, 362 residues long: Phosphoglycolate phosphatase 1B, chloroplastic (362 aa).

The N-terminal 54 residues, 1–54 (MLSRSVASAVTPVSSSSLLPNSKPIFCLKTLSGYRSSSFCGGCIRKINHKPLRM), are a transit peptide targeting the chloroplast. Threonine 55 carries the N-acetylthreonine modification. Catalysis depends on glutamate 80, which acts as the Nucleophile. At serine 356 the chain carries Phosphoserine.

The protein belongs to the HAD-like hydrolase superfamily. CbbY/CbbZ/Gph/YieH family.

The protein resides in the plastid. It localises to the chloroplast. It catalyses the reaction 2-phosphoglycolate + H2O = glycolate + phosphate. In terms of biological role, photorespiratory enzyme that dephosphorylates the 2-phosphoglycolate produced by the RuBisCO oxygenation reaction. The sequence is that of Phosphoglycolate phosphatase 1B, chloroplastic (PGLP1B) from Arabidopsis thaliana (Mouse-ear cress).